The chain runs to 268 residues: Ribosomal RNA small subunit methyltransferase A (268 aa).

S-adenosyl-L-methionine-binding residues include N10, I12, G37, E58, D83, and N107.

Belongs to the class I-like SAM-binding methyltransferase superfamily. rRNA adenine N(6)-methyltransferase family. RsmA subfamily.

The protein localises to the cytoplasm. It catalyses the reaction adenosine(1518)/adenosine(1519) in 16S rRNA + 4 S-adenosyl-L-methionine = N(6)-dimethyladenosine(1518)/N(6)-dimethyladenosine(1519) in 16S rRNA + 4 S-adenosyl-L-homocysteine + 4 H(+). Its function is as follows. Specifically dimethylates two adjacent adenosines (A1518 and A1519) in the loop of a conserved hairpin near the 3'-end of 16S rRNA in the 30S particle. May play a critical role in biogenesis of 30S subunits. The protein is Ribosomal RNA small subunit methyltransferase A of Caldanaerobacter subterraneus subsp. tengcongensis (strain DSM 15242 / JCM 11007 / NBRC 100824 / MB4) (Thermoanaerobacter tengcongensis).